The sequence spans 115 residues: NADH-ubiquinone oxidoreductase chain 3 (115 aa).

Helical transmembrane passes span 3–23 (LIMV…VAFW), 55–75 (FFLV…LLPI), and 84–104 (INTM…GLAY).

The protein belongs to the complex I subunit 3 family. Core subunit of respiratory chain NADH dehydrogenase (Complex I) which is composed of 45 different subunits. Interacts with TMEM186. Interacts with TMEM242.

It is found in the mitochondrion inner membrane. It carries out the reaction a ubiquinone + NADH + 5 H(+)(in) = a ubiquinol + NAD(+) + 4 H(+)(out). Core subunit of the mitochondrial membrane respiratory chain NADH dehydrogenase (Complex I) which catalyzes electron transfer from NADH through the respiratory chain, using ubiquinone as an electron acceptor. Essential for the catalytic activity of complex I. The chain is NADH-ubiquinone oxidoreductase chain 3 from Scotinomys teguina (Alston's brown mouse).